The primary structure comprises 392 residues: Na(+)/H(+) antiporter NhaA 2 (392 aa).

The next 11 membrane-spanning stretches (helical) occupy residues 20 to 40 (FFAA…AALI), 61 to 81 (LSVS…LVGL), 99 to 119 (ALPG…YVAF), 127 to 147 (IGGW…VLSL), 158 to 178 (IFLS…IALF), 181 to 201 (SDLS…LVAL), 209 to 229 (LLPY…SGIH), 265 to 285 (VAFA…LSGI), 298 to 318 (VALG…ALAI), 336 to 356 (GVAA…ALAF), and 365 to 385 (EVKV…VVVL).

It belongs to the NhaA Na(+)/H(+) (TC 2.A.33) antiporter family.

Its subcellular location is the cell inner membrane. The catalysed reaction is Na(+)(in) + 2 H(+)(out) = Na(+)(out) + 2 H(+)(in). Its function is as follows. Na(+)/H(+) antiporter that extrudes sodium in exchange for external protons. The sequence is that of Na(+)/H(+) antiporter NhaA 2 from Pseudomonas syringae pv. syringae (strain B728a).